We begin with the raw amino-acid sequence, 72 residues long: Translation initiation factor IF-1 (72 aa).

Positions 1-72 (MAKEELLEFP…TKGRINYRFK (72 aa)) constitute an S1-like domain.

Belongs to the IF-1 family. Component of the 30S ribosomal translation pre-initiation complex which assembles on the 30S ribosome in the order IF-2 and IF-3, IF-1 and N-formylmethionyl-tRNA(fMet); mRNA recruitment can occur at any time during PIC assembly.

It localises to the cytoplasm. Functionally, one of the essential components for the initiation of protein synthesis. Stabilizes the binding of IF-2 and IF-3 on the 30S subunit to which N-formylmethionyl-tRNA(fMet) subsequently binds. Helps modulate mRNA selection, yielding the 30S pre-initiation complex (PIC). Upon addition of the 50S ribosomal subunit IF-1, IF-2 and IF-3 are released leaving the mature 70S translation initiation complex. In Dinoroseobacter shibae (strain DSM 16493 / NCIMB 14021 / DFL 12), this protein is Translation initiation factor IF-1.